We begin with the raw amino-acid sequence, 254 residues long: Undecaprenyl-diphosphatase (254 aa).

8 helical membrane-spanning segments follow: residues 1–21 (MDIIQAIIIGIIEGFTEFLPI), 41–61 (LTKAYEVIIQFAAILAVMLIY), 70–90 (IDLWMKLLFAFLPLAIVGFIF), 97–117 (LFNVQVVAWMFIIGGIIFLIV), 134–154 (VSWTQAWWVGFAQIFSLIPGT), 175–195 (AEFSFLLAIPVMAVVSGYDLL), 209–229 (FLIGFIVAFIVAYATIKLFLV), and 234–254 (FTFVAFGIYRIIFGIFLLMIL).

Belongs to the UppP family.

The protein resides in the cell inner membrane. The enzyme catalyses di-trans,octa-cis-undecaprenyl diphosphate + H2O = di-trans,octa-cis-undecaprenyl phosphate + phosphate + H(+). In terms of biological role, catalyzes the dephosphorylation of undecaprenyl diphosphate (UPP). Confers resistance to bacitracin. The protein is Undecaprenyl-diphosphatase of Sulfurovum sp. (strain NBC37-1).